Consider the following 281-residue polypeptide: Probable short-chain type dehydrogenase/reductase blr2146 (281 aa).

10 to 34 (VVTGAGAGIGKACALAIAREGGRVV) contributes to the NAD(+) binding site. Ser-146 is a binding site for substrate. Residue Tyr-159 is the Proton acceptor of the active site. The interval 261-281 (GNSRAARPAGETAEADAAPRC) is disordered.

This sequence belongs to the short-chain dehydrogenases/reductases (SDR) family.

This Bradyrhizobium diazoefficiens (strain JCM 10833 / BCRC 13528 / IAM 13628 / NBRC 14792 / USDA 110) protein is Probable short-chain type dehydrogenase/reductase blr2146.